Consider the following 167-residue polypeptide: Ribosome maturation factor RimM (167 aa).

The 73-residue stretch at 94–166 folds into the PRC barrel domain; sequence TGRAYLHELI…YMVVPRFDEF (73 aa).

Belongs to the RimM family. In terms of assembly, binds ribosomal protein uS19.

It is found in the cytoplasm. Its function is as follows. An accessory protein needed during the final step in the assembly of 30S ribosomal subunit, possibly for assembly of the head region. Essential for efficient processing of 16S rRNA. May be needed both before and after RbfA during the maturation of 16S rRNA. It has affinity for free ribosomal 30S subunits but not for 70S ribosomes. This Chlorobium phaeobacteroides (strain DSM 266 / SMG 266 / 2430) protein is Ribosome maturation factor RimM.